Here is a 284-residue protein sequence, read N- to C-terminus: uncharacterized protein (284 aa).

Over residues 1 to 10 the composition is skewed to polar residues; the sequence is MSNSVTNFEM. The segment at 1 to 28 is disordered; it reads MSNSVTNFEMSSVLPGKKPCQGKNNESQ.

This is an uncharacterized protein from Escherichia coli (strain K12).